The chain runs to 245 residues: MADTANYINDRFQTFMNGLGDRYEPYVREHLSKVYMVLGSTAAATAMGAMLQMRDFLDLGVLAAVATLVLVLGLHFYKDDGKNYYTRLGMLYAFGFCSGQTLGPLLGYICSINPAIILSALTGTFVTFISLSLSALLAEQGKYLYLGGMLVSVINTMALLSLFNMVFKSYFVQVTQLYVGVFVMAAFIVYDTQNIVEKCRNGNRDVVQHALDLFFDVLSMFRRLLIILTQKEERKQNERRQNKTK.

Residues methionine 1 to histidine 30 are Cytoplasmic-facing. Residues leucine 31–leucine 51 form a helical membrane-spanning segment. The Lumenal segment spans residues glutamine 52–aspartate 55. Residues phenylalanine 56–phenylalanine 76 form a helical membrane-spanning segment. Residues tyrosine 77–leucine 88 lie on the Cytoplasmic side of the membrane. A helical membrane pass occupies residues glycine 89–isoleucine 109. Topologically, residues cysteine 110–alanine 115 are lumenal. A helical transmembrane segment spans residues isoleucine 116–leucine 136. The Cytoplasmic segment spans residues leucine 137–lysine 142. A helical membrane pass occupies residues tyrosine 143–phenylalanine 163. The Lumenal portion of the chain corresponds to asparagine 164–serine 169. The helical transmembrane segment at tyrosine 170–tyrosine 190 threads the bilayer. The Cytoplasmic segment spans residues aspartate 191–lysine 245.

It belongs to the BI1 family.

It localises to the endoplasmic reticulum membrane. Functionally, suppressor of apoptosis. Modulates unfolded protein response signaling. Negatively regulates autophagy and autophagosome formation, especially during periods of nutrient deprivation, and reduces cell survival during starvation. This chain is Bax inhibitor 1, found in Drosophila melanogaster (Fruit fly).